The following is a 289-amino-acid chain: tRNA (adenine(58)-N(1))-methyltransferase catalytic subunit TRMT61A (289 aa).

Ser-2 is modified (N-acetylserine). Substrate is bound by residues 20 to 22 (LGH), 35 to 42 (QTQTRHGV), 64 to 65 (GW), 85 to 89 (QILYS), and 110 to 117 (SGTGSGSV). S-adenosyl-L-methionine contacts are provided by residues Leu-87, 114–116 (SGS), Glu-135, Arg-140, 163–164 (DV), and Asp-181. Residues 180 to 183 (LDIP) and 205 to 212 (SFSPCIEQ) contribute to the substrate site. Positions 245–272 (LPPPDLGTGTDGPAGSDTSPFRSGTPMK) are disordered. Residues 250–259 (LGTGTDGPAG) show a composition bias toward low complexity. Ser-263 carries the post-translational modification Phosphoserine. Residue Thr-278 coordinates substrate.

It belongs to the class I-like SAM-binding methyltransferase superfamily. TRM61 family. Heterotetramer; composed of two copies of TRMT6 and two copies of TRMT61A.

The protein resides in the nucleus. It carries out the reaction adenosine(58) in tRNA + S-adenosyl-L-methionine = N(1)-methyladenosine(58) in tRNA + S-adenosyl-L-homocysteine + H(+). The enzyme catalyses an adenosine in mRNA + S-adenosyl-L-methionine = an N(1)-methyladenosine in mRNA + S-adenosyl-L-homocysteine + H(+). Catalytic subunit of tRNA (adenine-N(1)-)-methyltransferase, which catalyzes the formation of N(1)-methyladenine at position 58 (m1A58) in initiator methionyl-tRNA. Catalytic subunit of mRNA N(1)-methyltransferase complex, which mediates methylation of adenosine residues at the N(1) position of a small subset of mRNAs: N(1) methylation takes place in tRNA T-loop-like structures of mRNAs and is only present at low stoichiometries. The protein is tRNA (adenine(58)-N(1))-methyltransferase catalytic subunit TRMT61A (TRMT61A) of Homo sapiens (Human).